The primary structure comprises 128 residues: MIMINYLVNRMDFQMASFITSGLLVIIGLYGVFFVDNVLKKIIALEILGSGVNLALIAIGYNGGTIPIKLPGVSVEVFAKESAYPLTHALVLTNIVIEASMLAVMLGVSIILYKKYKTLRSSVILKED.

The next 3 helical transmembrane spans lie at 13 to 35, 42 to 64, and 90 to 112; these read FQMASFITSGLLVIIGLYGVFFV, IIALEILGSGVNLALIAIGYNGG, and LVLTNIVIEASMLAVMLGVSIIL.

Its subcellular location is the cell membrane. This is an uncharacterized protein from Methanocaldococcus jannaschii (strain ATCC 43067 / DSM 2661 / JAL-1 / JCM 10045 / NBRC 100440) (Methanococcus jannaschii).